The sequence spans 1101 residues: Carbamoyl phosphate synthase large chain (1101 aa).

Residues 1–402 form a carboxyphosphate synthetic domain region; that stretch reads MPKRTDLKSV…ALQKALRSLE (402 aa). ATP-binding residues include arginine 129, arginine 169, glycine 175, glycine 176, glutamate 208, isoleucine 210, glutamate 215, glycine 241, valine 242, histidine 243, glutamine 285, and glutamate 299. The ATP-grasp 1 domain occupies 133 to 328; that stretch reads KGVVERAGGE…IAKIATKLAL (196 aa). Positions 285, 299, and 301 each coordinate Mg(2+). Mn(2+) is bound by residues glutamine 285, glutamate 299, and asparagine 301. The oligomerization domain stretch occupies residues 403-544; it reads QKGSELAFPQ…YRYSSYDLET (142 aa). The interval 545–947 is carbamoyl phosphate synthetic domain; the sequence is EVAPHEGESV…AFAKSQSAAG (403 aa). The ATP-grasp 2 domain occupies 675-866; the sequence is ALVLERAGLV…LAKAAARIGV (192 aa). Arginine 711, arginine 750, leucine 752, glutamate 757, glycine 782, isoleucine 783, histidine 784, serine 785, glutamine 825, and glutamate 837 together coordinate ATP. Mg(2+)-binding residues include glutamine 825, glutamate 837, and asparagine 839. Mn(2+)-binding residues include glutamine 825, glutamate 837, and asparagine 839. An MGS-like domain is found at 948–1093; the sequence is GPLPTSGRVF…QEHDARLQQA (146 aa). The tract at residues 948–1101 is allosteric domain; that stretch reads GPLPTSGRVF…QAVAGPEAAA (154 aa).

It belongs to the CarB family. As to quaternary structure, composed of two chains; the small (or glutamine) chain promotes the hydrolysis of glutamine to ammonia, which is used by the large (or ammonia) chain to synthesize carbamoyl phosphate. Tetramer of heterodimers (alpha,beta)4. Mg(2+) is required as a cofactor. Mn(2+) serves as cofactor.

It carries out the reaction hydrogencarbonate + L-glutamine + 2 ATP + H2O = carbamoyl phosphate + L-glutamate + 2 ADP + phosphate + 2 H(+). The enzyme catalyses hydrogencarbonate + NH4(+) + 2 ATP = carbamoyl phosphate + 2 ADP + phosphate + 2 H(+). It participates in amino-acid biosynthesis; L-arginine biosynthesis; carbamoyl phosphate from bicarbonate: step 1/1. It functions in the pathway pyrimidine metabolism; UMP biosynthesis via de novo pathway; (S)-dihydroorotate from bicarbonate: step 1/3. Large subunit of the glutamine-dependent carbamoyl phosphate synthetase (CPSase). CPSase catalyzes the formation of carbamoyl phosphate from the ammonia moiety of glutamine, carbonate, and phosphate donated by ATP, constituting the first step of 2 biosynthetic pathways, one leading to arginine and/or urea and the other to pyrimidine nucleotides. The large subunit (synthetase) binds the substrates ammonia (free or transferred from glutamine from the small subunit), hydrogencarbonate and ATP and carries out an ATP-coupled ligase reaction, activating hydrogencarbonate by forming carboxy phosphate which reacts with ammonia to form carbamoyl phosphate. In Micrococcus luteus (strain ATCC 4698 / DSM 20030 / JCM 1464 / CCM 169 / CCUG 5858 / IAM 1056 / NBRC 3333 / NCIMB 9278 / NCTC 2665 / VKM Ac-2230) (Micrococcus lysodeikticus), this protein is Carbamoyl phosphate synthase large chain.